Here is a 196-residue protein sequence, read N- to C-terminus: Transmembrane protein 126A (196 aa).

The Mitochondrial matrix segment spans residues 1-34 (MENHKSNNTKENITIVDISRKINQLPEAERNLLE). Residues 35–55 (HGSVYVGLNAALCGLIANSLF) form a helical membrane-spanning segment. Topologically, residues 56 to 57 (RR) are mitochondrial intermembrane. Residues 58–78 (ILNVTKARIAAGLPMAWIPFL) traverse the membrane as a helical segment. Over 79-107 (TTDITYRCFVSFPLNTGDLDCETCTITRS) the chain is Mitochondrial matrix. The helical transmembrane segment at 108 to 128 (GLIGLVIGGLYPVFLAIPVNG) threads the bilayer. At 129-159 (GLAARYQSALLPHKGNILSYWIRTSKPVFRK) the chain is on the mitochondrial intermembrane side. Residues 160 to 176 (MLFPIMLQTMFSAYLGS) traverse the membrane as a helical segment. The Mitochondrial matrix segment spans residues 177-196 (EQYKLLIKALQLSEPGKEIH).

Belongs to the TMEM126 family. Interacts with OXA1L; promoting cotranslational quality control in mitochondria.

Its subcellular location is the mitochondrion inner membrane. Protein required for the cotranslational protein quality control in the inner membrane of the mitochondria. Associates with newly synthesized polypeptides and may act as a chaperone that cooperates with OXA1L for the insertion of newly synthesized mitochondrial proteins into the inner membrane. Required for the assembly of the ND4 module of mitochondrial complex I. In Pongo abelii (Sumatran orangutan), this protein is Transmembrane protein 126A (TMEM126A).